Here is a 301-residue protein sequence, read N- to C-terminus: Rhodopsin (301 aa).

Residues 1–18 (LHMIHLHWYQYPPMNPMM) lie on the Extracellular side of the membrane. A helical transmembrane segment spans residues 19 to 43 (YPLLLIFMLFTGILCLAGNFVTIWV). At 44-55 (FMNTKSLRTPAN) the chain is on the cytoplasmic side. A helical transmembrane segment spans residues 56 to 78 (LLVVNLAMSDFLMMFTMFPPMMV). At 79 to 92 (TCYYHTWTLGPTFC) the chain is on the extracellular side. Cysteines 92 and 169 form a disulfide. The helical transmembrane segment at 93–115 (QVYAFLGNLCGCASIWTMVFITF) threads the bilayer. The 'Ionic lock' involved in activated form stabilization motif lies at 116–118 (DRY). The Cytoplasmic segment spans residues 116 to 134 (DRYNVIVKGVAGEPLSTKK). A helical membrane pass occupies residues 135–155 (ASLWILTIWVLSTTWCIAPFF). Residues 156–182 (GWNHYVPEGNLTGCGTDYLSEDILSRS) are Extracellular-facing. The N-linked (GlcNAc...) asparagine glycan is linked to Asn-165. The chain crosses the membrane as a helical span at residues 183-204 (YLYVYSTWVYFLPLAITIYCYV). The Cytoplasmic segment spans residues 205-245 (FIIKAVAAHEKGMRDQAKKMGIKSLRNEEAQKTSAECRLAK). Residues 246 to 267 (IAMTTVALWFIAWTPCLLINWV) form a helical membrane-spanning segment. The Extracellular segment spans residues 268–278 (GMFARSYLSPV). Residues 279 to 300 (YTIWGYVFAKANAVYNPIVYAI) form a helical membrane-spanning segment. N6-(retinylidene)lysine is present on Lys-288.

The protein belongs to the G-protein coupled receptor 1 family. Opsin subfamily. As to quaternary structure, homodimer. Interacts with GNAQ. In terms of processing, contains one covalently linked retinal chromophore.

It is found in the cell projection. Its subcellular location is the rhabdomere membrane. In terms of biological role, photoreceptor required for image-forming vision at low light intensity. Can use both retinal and 3-dehydroretinal as visual pigment. Light-induced isomerization of 11-cis to all-trans retinal triggers a conformational change that activates signaling via G-proteins. Signaling via GNAQ probably mediates the activation of phospholipase C. This chain is Rhodopsin (RHO), found in Procambarus seminolae (Crayfish).